We begin with the raw amino-acid sequence, 275 residues long: Transcription regulator AOL_s00215g275 (275 aa).

Disordered stretches follow at residues 13–65 and 84–108; these read TPLP…SSIG and ILQQ…RQRL. The segment covering 14-26 has biased composition (polar residues); it reads PLPSLNSSRSPQR. The span at 27-40 shows a compositional bias: low complexity; the sequence is TPSLGSSSTSSLSP. The span at 47-60 shows a compositional bias: polar residues; that stretch reads TPSTPESNDSGLTL. The span at 88–106 shows a compositional bias: basic residues; that stretch reads KSRHQNQPSRRHKQKNRRQ.

Functionally, regulatory protein; part of the gene cluster that mediates the biosynthesis of sesquiterpenyl epoxy-cyclohexenoids (SECs) such as anthrobotrisins and arthrosporols, metabolites that possess a novel hybrid carbon skeleton consisting of a polyketide-derived epoxycyclohexenol combined with a terpenoid-derived monocyclic sesquiterpenol substructure (PKS-PTS hybrid). The SEC pathway plays an important role for fungal soil colonization via decreasing fungal nematode-capturing ability. AOL_s00215g275 can perform multiple functions in fungal growth and development via regulating the SEC biosynthesis, TCA cycle, and septa formation. Also involved in inhibiting conidial formation, germination, and nematicidal activity but promotes trap production. Plays a role in fungal resistances and significantly regulates the fungal morphology and responses to chemical stressors such as cell-wall-perturbing agents (SDS and Congo red), osmotic agents (NaCl and sorbitol), or the oxidant H(2)O(2). In Arthrobotrys oligospora (strain ATCC 24927 / CBS 115.81 / DSM 1491) (Nematode-trapping fungus), this protein is Transcription regulator AOL_s00215g275.